The sequence spans 230 residues: Germin-like protein 5-1 (230 aa).

A signal peptide spans 1 to 20 (MAMVGRSLLLLLLLVTLAAG). C38 and C53 are joined by a disulfide. Residues 86-219 (YGFTARSVDI…TLLTDEATVD (134 aa)) form the Cupin type-1 domain. Mn(2+) contacts are provided by H119, H121, E126, and H167. The N-linked (GlcNAc...) asparagine glycan is linked to N172.

It belongs to the germin family. In terms of assembly, oligomer (believed to be a pentamer but probably hexamer).

The protein resides in the secreted. Its subcellular location is the extracellular space. It is found in the apoplast. In terms of biological role, may play a role in plant defense. Probably has no oxalate oxidase activity even if the active site is conserved. In Oryza sativa subsp. japonica (Rice), this protein is Germin-like protein 5-1.